Reading from the N-terminus, the 100-residue chain is Protein RnfH (100 aa).

The protein belongs to the UPF0125 (RnfH) family.

The sequence is that of Protein RnfH from Actinobacillus succinogenes (strain ATCC 55618 / DSM 22257 / CCUG 43843 / 130Z).